Consider the following 137-residue polypeptide: Outer membrane protein assembly factor BamE (137 aa).

The first 18 residues, 1-18, serve as a signal peptide directing secretion; sequence MQVKTLLGATFLALSLAS. The N-palmitoyl cysteine moiety is linked to residue C19. The S-diacylglycerol cysteine moiety is linked to residue C19.

The protein belongs to the BamE family. In terms of assembly, part of the Bam complex.

It is found in the cell outer membrane. Its function is as follows. Part of the outer membrane protein assembly complex, which is involved in assembly and insertion of beta-barrel proteins into the outer membrane. This is Outer membrane protein assembly factor BamE from Haemophilus influenzae (strain ATCC 51907 / DSM 11121 / KW20 / Rd).